The primary structure comprises 368 residues: 1-aminocyclopropane-1-carboxylate oxidase (368 aa).

Residues 177 to 307 enclose the Fe2OG dioxygenase domain; the sequence is PFILMGLLHY…RFSIPFFLDP (131 aa). The segment at 191–226 is disordered; the sequence is HQEQEEEQEDDESNNGGKKSPNPDESKKPEVEKFGT. The span at 194–203 shows a compositional bias: acidic residues; it reads QEEEQEDDES. The span at 211–223 shows a compositional bias: basic and acidic residues; sequence PNPDESKKPEVEK. Fe cation is bound by residues His-229, Asp-231, and His-287. Position 298 (Arg-298) interacts with 2-oxoglutarate.

It belongs to the iron/ascorbate-dependent oxidoreductase family. Requires Fe(2+) as cofactor.

It carries out the reaction 1-aminocyclopropane-1-carboxylate + L-ascorbate + O2 = ethene + L-dehydroascorbate + hydrogen cyanide + CO2 + 2 H2O. It functions in the pathway alkene biosynthesis; ethylene biosynthesis via S-adenosyl-L-methionine; ethylene from S-adenosyl-L-methionine: step 2/2. Its function is as follows. Involved in ethylene biosynthesis. Overexpression induces overproduction of ethylene. The sequence is that of 1-aminocyclopropane-1-carboxylate oxidase (aco) from Dictyostelium discoideum (Social amoeba).